Here is a 221-residue protein sequence, read N- to C-terminus: Histone H1C (221 aa).

Disordered stretches follow at residues 1–43 (MSDP…PPVS) and 113–221 (AAKK…AKKA). Residues 38 to 112 (THPPVSEMVF…GALGSFKLPA (75 aa)) form the H15 domain. Composition is skewed to basic residues over residues 141 to 167 (KVKK…KTTK) and 175 to 221 (AAKK…AKKA).

The protein belongs to the histone H1/H5 family.

The protein localises to the nucleus. Its subcellular location is the chromosome. In terms of biological role, histones H1 are necessary for the condensation of nucleosome chains into higher-order structures. In Chironomus tentans (Midge), this protein is Histone H1C.